The primary structure comprises 59 residues: Mu-conotoxin SrVA (59 aa).

The first 22 residues, 1–22 (MRCLPVFVILLLLIASAPSVDA), serve as a signal peptide directing secretion. A propeptide spanning residues 23–44 (QLKTKDDVPLASFHDNAKGTQH) is cleaved from the precursor. Intrachain disulfides connect cysteine 51–cysteine 58 and cysteine 52–cysteine 59.

This sequence belongs to the conotoxin T superfamily. In terms of tissue distribution, expressed by the venom duct.

The protein localises to the secreted. Functionally, mu-conotoxins block voltage-gated sodium channels. This peptide inhibits the cardiac sodium channel hNav1.5/SCN5A (33% inhibition at 200 nM, 50% at 400 nM, and 55% at 600 nM). Does not interfere with the voltage-dependence of activation, but affects the voltage-dependence of inactivation of hNav1.5. In vivo, intracranial injection into 9-day-old mice causes transient symptoms, including extension of the body and clockwise and counter-clockwise turns, that last 3 to 4 minutes. Intracranial injection into 16-day-old mice, causes transient symptoms, including agitated breathing and occasional turning followed by scratching and grooming behavior, that last for 15-19 minutes. The chain is Mu-conotoxin SrVA from Conus spurius (Alphabet cone).